A 126-amino-acid chain; its full sequence is Autophagy-related protein 8-like protein DDB_G0290491 (126 aa).

Residue G123 is the site of Phosphatidylethanolamine amidated glycine attachment. Residues 124–126 (SDI) constitute a propeptide, removed in mature form.

Belongs to the ATG8 family.

The protein resides in the membrane. The chain is Autophagy-related protein 8-like protein DDB_G0290491 from Dictyostelium discoideum (Social amoeba).